The following is a 498-amino-acid chain: MRINPTTSVPGVSTLEEKNLGRIAQIIGPVLDVAFPPGKMPNIYNALVVKGRDTVGQQINVTCEVQQLLGNNRVRTVAMSATDGLMRGMEVIDTGAPLSVPVGGATLGRIFNVLGEPVDNLGPVDTRTTSPIHRSAPAFIQLDTRLSIFETGIKVVDLLAPYRRGGKIGLFGGAGVGKTVLIMELINNIAKAHGGVSVFGGVGERTREGNDLYMEMKESGVINEQNLAESKVALVYGQXXEPPGARMRVGLTALTMAEYFRDVXEQDVLLFIDNIFRFVQAGSEVSALLGRMPSAVGYQPTLSTEMGSLQERITSTKEGSITSIQAVYVPADDLTDPAPATTFAHLDATTVLSRGLAXKGIYPAVDPLDSTSTMLQPRIVGEEHYETAQRVKQTSQRYKELQDIIAILGLDELSEEDRLTVARARKIERFLSQPFFVAEVFTGSPGKYVGLAETIRGFQLILSGELDGLPEQAFYLVGNIDEATAKAINLDEESKLKK.

172-179 is an ATP binding site; it reads GGAGVGKT.

Belongs to the ATPase alpha/beta chains family. F-type ATPases have 2 components, CF(1) - the catalytic core - and CF(0) - the membrane proton channel. CF(1) has five subunits: alpha(3), beta(3), gamma(1), delta(1), epsilon(1). CF(0) has four main subunits: a(1), b(1), b'(1) and c(9-12).

Its subcellular location is the plastid. It localises to the chloroplast thylakoid membrane. It carries out the reaction ATP + H2O + 4 H(+)(in) = ADP + phosphate + 5 H(+)(out). Produces ATP from ADP in the presence of a proton gradient across the membrane. The catalytic sites are hosted primarily by the beta subunits. The polypeptide is ATP synthase subunit beta, chloroplastic (Asarum canadense (Wild ginger)).